Consider the following 395-residue polypeptide: MNHLESKFGQFGGMYVPELLIPALDQLEQAFIDAQNDPEFQKEFMELLTDYAGRPTAMTLSRNLVSNPNVKLYLKREDLLHGGAHKTNQVLGQALLTKRMGKTEVIAETGAGQHGVATALACALLGLKARIYMGAKDVERQAPNVFRMRLMGAEVIPVNAGSGTLKDAVNEAMRDWSATYDKAHYLLGTAAGPHPFPTIVREFHRMIGEETRAQIMAKEGRLPDAVVACVGGGSNAIGMFADFIDEPSVQLIGVEPAGKGLHTAEHGAAIGKGTTGILHGAYSYIMQDEDGQIEESYSVSAGLDYPAVGPQHAHLHDIGRATYAAVTDDEALYAFQLLSRKEGIIPALESSHALAHALNMADEAEDGTIIVVNLSGRGDKDLAHVHSILGGQTNE.

Position 86 is an N6-(pyridoxal phosphate)lysine (lysine 86).

Belongs to the TrpB family. Tetramer of two alpha and two beta chains. Pyridoxal 5'-phosphate is required as a cofactor.

The catalysed reaction is (1S,2R)-1-C-(indol-3-yl)glycerol 3-phosphate + L-serine = D-glyceraldehyde 3-phosphate + L-tryptophan + H2O. It participates in amino-acid biosynthesis; L-tryptophan biosynthesis; L-tryptophan from chorismate: step 5/5. In terms of biological role, the beta subunit is responsible for the synthesis of L-tryptophan from indole and L-serine. This is Tryptophan synthase beta chain from Pseudoalteromonas atlantica (strain T6c / ATCC BAA-1087).